A 389-amino-acid polypeptide reads, in one-letter code: Type 2 DNA topoisomerase 6 subunit A (389 aa).

Residues 13 to 161 enclose the Topo IIA-type catalytic domain; that stretch reads KARLRAAEVM…MLILSKEKGK (149 aa). Tyrosine 107 functions as the O-(5'-phospho-DNA)-tyrosine intermediate in the catalytic mechanism. The Mg(2+) site is built by glutamate 208 and aspartate 260.

Belongs to the TOP6A family. In terms of assembly, homodimer. Heterotetramer of two Top6A and two Top6B chains. The cofactor is Mg(2+).

The catalysed reaction is ATP-dependent breakage, passage and rejoining of double-stranded DNA.. Relaxes both positive and negative superturns and exhibits a strong decatenase activity. This chain is Type 2 DNA topoisomerase 6 subunit A, found in Aeropyrum pernix (strain ATCC 700893 / DSM 11879 / JCM 9820 / NBRC 100138 / K1).